The chain runs to 336 residues: 4-hydroxy-3-methylbut-2-enyl diphosphate reductase (336 aa).

Cys-37 is a binding site for [4Fe-4S] cluster. Positions 66 and 99 each coordinate (2E)-4-hydroxy-3-methylbut-2-enyl diphosphate. Dimethylallyl diphosphate-binding residues include His-66 and His-99. Residues His-66 and His-99 each contribute to the isopentenyl diphosphate site. Cys-121 contributes to the [4Fe-4S] cluster binding site. Position 149 (His-149) interacts with (2E)-4-hydroxy-3-methylbut-2-enyl diphosphate. His-149 serves as a coordination point for dimethylallyl diphosphate. His-149 contacts isopentenyl diphosphate. Catalysis depends on Glu-151, which acts as the Proton donor. Thr-189 lines the (2E)-4-hydroxy-3-methylbut-2-enyl diphosphate pocket. Cys-219 is a binding site for [4Fe-4S] cluster. Ser-247, Ser-248, Asn-249, and Ser-292 together coordinate (2E)-4-hydroxy-3-methylbut-2-enyl diphosphate. Residues Ser-247, Ser-248, Asn-249, and Ser-292 each coordinate dimethylallyl diphosphate. Isopentenyl diphosphate contacts are provided by Ser-247, Ser-248, Asn-249, and Ser-292.

Belongs to the IspH family. The cofactor is [4Fe-4S] cluster.

It carries out the reaction isopentenyl diphosphate + 2 oxidized [2Fe-2S]-[ferredoxin] + H2O = (2E)-4-hydroxy-3-methylbut-2-enyl diphosphate + 2 reduced [2Fe-2S]-[ferredoxin] + 2 H(+). It catalyses the reaction dimethylallyl diphosphate + 2 oxidized [2Fe-2S]-[ferredoxin] + H2O = (2E)-4-hydroxy-3-methylbut-2-enyl diphosphate + 2 reduced [2Fe-2S]-[ferredoxin] + 2 H(+). The protein operates within isoprenoid biosynthesis; dimethylallyl diphosphate biosynthesis; dimethylallyl diphosphate from (2E)-4-hydroxy-3-methylbutenyl diphosphate: step 1/1. It participates in isoprenoid biosynthesis; isopentenyl diphosphate biosynthesis via DXP pathway; isopentenyl diphosphate from 1-deoxy-D-xylulose 5-phosphate: step 6/6. Catalyzes the conversion of 1-hydroxy-2-methyl-2-(E)-butenyl 4-diphosphate (HMBPP) into a mixture of isopentenyl diphosphate (IPP) and dimethylallyl diphosphate (DMAPP). Acts in the terminal step of the DOXP/MEP pathway for isoprenoid precursor biosynthesis. The protein is 4-hydroxy-3-methylbut-2-enyl diphosphate reductase of Nocardia farcinica (strain IFM 10152).